Reading from the N-terminus, the 76-residue chain is Small VCP/p97-interacting protein (76 aa).

Positions 1 to 76 are disordered; sequence MGLCFPCPAE…PAGGLRWTVS (76 aa). G2 is lipidated: N-myristoyl glycine. Residues C4 and C7 are each lipidated (S-palmitoyl cysteine). Residues 18 to 37 show a composition bias toward basic and acidic residues; it reads PEEKRAKLAEAAERRQKEAA. The interval 21-33 is VCP/p97-interacting motif (VIM); the sequence is KRAKLAEAAERRQ. S46 is modified (phosphoserine).

This sequence belongs to the SVIP family. Interacts with VCP. Forms a complex with VCP/p97 and DERL1. As to expression, ubiquitous. In the adrenal gland, it is expressed in the cortex at all developmental stages.

It is found in the membrane. It localises to the smooth endoplasmic reticulum membrane. The protein localises to the golgi apparatus membrane. Its subcellular location is the cell membrane. The protein resides in the lysosome membrane. Its function is as follows. Negative regulator of the ER-associated degradation pathway (ERAD) of misfolded proteins. It competes with AMFR/gp78 for binding VCP/p97, and inhibits AMFR/gp78-VCP/p97 complex formation that is required for degradation of ERAD substrates. Involved in the regulation of adrenal cortisol and dehydroepiandrosterone (DHEA) biosynthesis. The protein is Small VCP/p97-interacting protein (Svip) of Rattus norvegicus (Rat).